The chain runs to 247 residues: MSGHNKWSTIRHKKGAADAKRGKVFTKLIKEITVAAKIGGGDPNGNPRLRAAVDKAKAENMPKDNIERAIKKGTGELEGVSYEEIIYEGYGPGGVAVLVECMTDNRNRTVGEVRSTFTKCNGNMGEAGCVSWMFDKKGLIVLSKDVDFEKLFETALEAGADDVADEEEQYEVLTDPAAFIDVREALEKAGFPFESAEITMIPQTMVKLDGKNAENMLKLMDRLEDNDDVQNVYANFDISTEEMEKLM.

It belongs to the TACO1 family.

It localises to the cytoplasm. The sequence is that of Probable transcriptional regulatory protein GSU1074 from Geobacter sulfurreducens (strain ATCC 51573 / DSM 12127 / PCA).